Here is a 358-residue protein sequence, read N- to C-terminus: Phosphoserine aminotransferase (358 aa).

Arg41 contributes to the L-glutamate binding site. Residues 75 to 76 (AR), Trp101, Thr150, Asp170, and Gln193 each bind pyridoxal 5'-phosphate. N6-(pyridoxal phosphate)lysine is present on Lys194. 235-236 (NT) provides a ligand contact to pyridoxal 5'-phosphate.

The protein belongs to the class-V pyridoxal-phosphate-dependent aminotransferase family. SerC subfamily. As to quaternary structure, homodimer. The cofactor is pyridoxal 5'-phosphate.

The protein resides in the cytoplasm. The catalysed reaction is O-phospho-L-serine + 2-oxoglutarate = 3-phosphooxypyruvate + L-glutamate. It catalyses the reaction 4-(phosphooxy)-L-threonine + 2-oxoglutarate = (R)-3-hydroxy-2-oxo-4-phosphooxybutanoate + L-glutamate. The protein operates within amino-acid biosynthesis; L-serine biosynthesis; L-serine from 3-phospho-D-glycerate: step 2/3. Its pathway is cofactor biosynthesis; pyridoxine 5'-phosphate biosynthesis; pyridoxine 5'-phosphate from D-erythrose 4-phosphate: step 3/5. Functionally, catalyzes the reversible conversion of 3-phosphohydroxypyruvate to phosphoserine and of 3-hydroxy-2-oxo-4-phosphonooxybutanoate to phosphohydroxythreonine. The protein is Phosphoserine aminotransferase of Histophilus somni (strain 129Pt) (Haemophilus somnus).